A 298-amino-acid chain; its full sequence is Probable phosphite transport system-binding protein HtxB (298 aa).

Positions 1-33 (MQVFTLFSKFKKALTRAILAFIATIIVCTPAQA) are cleaved as a signal peptide.

The protein belongs to the phosphate/phosphite/phosphonate binding protein family.

Probably forms part of a binding-protein-dependent hypophosphite transporter. This is Probable phosphite transport system-binding protein HtxB (htxB) from Stutzerimonas stutzeri (Pseudomonas stutzeri).